The chain runs to 571 residues: Peptide-N4-(N-acetyl-beta-glucosaminyl)asparagine amidase A (571 aa).

12 N-linked (GlcNAc...) asparagine glycosylation sites follow: Asn121, Asn143, Asn197, Asn241, Asn318, Asn367, Asn390, Asn423, Asn457, Asn481, Asn524, and Asn529.

In terms of assembly, heterodimer of a large and a small chain. In terms of processing, is highly glycosylated and is largly resistant against self-deglycosylation.

The enzyme catalyses Hydrolysis of an N(4)-(acetyl-beta-D-glucosaminyl)asparagine residue in which the glucosamine residue may be further glycosylated, to yield a (substituted) N-acetyl-beta-D-glucosaminylamine and a peptide containing an aspartate residue.. The sequence is that of Peptide-N4-(N-acetyl-beta-glucosaminyl)asparagine amidase A from Prunus dulcis (Almond).